Here is a 123-residue protein sequence, read N- to C-terminus: Probable cyclase otaY (123 aa).

The protein belongs to the aurE cyclase family.

It functions in the pathway mycotoxin biosynthesis. In terms of biological role, probable cyclase; part of the gene cluster that mediates the biosynthesis of ochratoxin A (OTA), a mycotoxin composed of a chlorinated type I polyketide dihydroisocoumarin moiety linked to L-phenylalanine, and demonstrated to have nephrotoxic, immunotoxic, genotoxic, neurotoxic, and teratogenic properties. OtaY is probably involved in the polyketide cyclization. The pathway begins with the highly reducing polyketide synthase otaA that catalyzes the formation of the isocoumarin group during the initial stages of biosynthesis, starting from one acetate and 4 malonate units, to originate the characteristic pentaketide skeleton 7-methylmellein (7-MM) of the OTA molecule. The newly identified cyclase otaY might be involved in the polyketide cyclization reaction during the initial steps of the OTA biosynthesis. 7-MM is then oxidized into 7-carboxymellein (also called ochratoxin beta) by the cytochrome P450 monooxygenase otaC. The NRPS encoded by the otaB gene is involved in the linking of phenylalanine to the dihydroisocoumarin ring. The reaction catalyzed by NRPS results in the production of ochratoxin B (OTB), which is the non-chlorinated analog of OTA and which subsequently serves as the substrate of the halogenase otaD for chlorination activity to form the final molecular structure of OTA, containing a chlorine atom in the C-5 position of the molecule. This is Probable cyclase otaY from Aspergillus carbonarius (strain ITEM 5010).